The chain runs to 905 residues: Probable cation-transporting ATPase F (905 aa).

The next 3 helical transmembrane spans lie at 84–104 (EFVDAAVIFGVVVINAIVGFI), 248–268 (FSKFLTIAILGLAALTFGVGL), and 283–303 (ALAVGAIPEGLPTAVTITLAI). Asp-333 (4-aspartylphosphate intermediate) is an active-site residue. Mg(2+) is bound by residues Asp-643 and Asp-647. 6 consecutive transmembrane segments (helical) span residues 716–736 (ILAAIAVGVALPILPTQILWI), 738–758 (MTTAIALGLMLAFEPKEAGIM), 778–798 (TLLVSTLLVASAWWLFAWELD), 808–828 (TAALNLFVVVEAFYLFSCRSL), 842–862 (WIILGVSAQAIAQFAITYLPA), and 872–892 (IDIGVWVRIFAVATAITIVVA).

This sequence belongs to the cation transport ATPase (P-type) (TC 3.A.3) family. Type IIA subfamily.

The protein resides in the cell membrane. It catalyses the reaction ATP + H2O = ADP + phosphate + H(+). In Mycobacterium bovis (strain ATCC BAA-935 / AF2122/97), this protein is Probable cation-transporting ATPase F (ctpF).